Consider the following 204-residue polypeptide: MSKVTVLNDKFEKASELDLPAKYAEVNPHNLYLYVKSYLASLRANTAHTKGRSDVSGGGKKPWRQKGRGGARAGSTRTNVWVGGAVAFGPKNNRNYFQKVNKKQKRLALERALEDKAAKNALFSVDSLSIESGKTKDANAVIKKLGLKDVLIVKDLLDEKTLLAFRNLANCYVVDVNEVNAYLVSVFNAVIIEKAALESIVKEG.

A disordered region spans residues 49–75 (TKGRSDVSGGGKKPWRQKGRGGARAGS).

This sequence belongs to the universal ribosomal protein uL4 family. Part of the 50S ribosomal subunit.

Functionally, one of the primary rRNA binding proteins, this protein initially binds near the 5'-end of the 23S rRNA. It is important during the early stages of 50S assembly. It makes multiple contacts with different domains of the 23S rRNA in the assembled 50S subunit and ribosome. Its function is as follows. Forms part of the polypeptide exit tunnel. This Campylobacter lari (strain RM2100 / D67 / ATCC BAA-1060) protein is Large ribosomal subunit protein uL4.